The primary structure comprises 319 residues: Acetyl-coenzyme A carboxylase carboxyl transferase subunit alpha (319 aa).

The region spanning 38–293 is the CoA carboxyltransferase C-terminal domain; sequence HALQDKLRLR…KAVLLNELDA (256 aa).

It belongs to the AccA family. As to quaternary structure, acetyl-CoA carboxylase is a heterohexamer composed of biotin carboxyl carrier protein (AccB), biotin carboxylase (AccC) and two subunits each of ACCase subunit alpha (AccA) and ACCase subunit beta (AccD).

The protein localises to the cytoplasm. The catalysed reaction is N(6)-carboxybiotinyl-L-lysyl-[protein] + acetyl-CoA = N(6)-biotinyl-L-lysyl-[protein] + malonyl-CoA. Its pathway is lipid metabolism; malonyl-CoA biosynthesis; malonyl-CoA from acetyl-CoA: step 1/1. Its function is as follows. Component of the acetyl coenzyme A carboxylase (ACC) complex. First, biotin carboxylase catalyzes the carboxylation of biotin on its carrier protein (BCCP) and then the CO(2) group is transferred by the carboxyltransferase to acetyl-CoA to form malonyl-CoA. This chain is Acetyl-coenzyme A carboxylase carboxyl transferase subunit alpha, found in Stenotrophomonas maltophilia (strain R551-3).